The sequence spans 338 residues: General transcription and DNA repair factor IIH subunit TFB4 (338 aa).

N-acetylmethionine is present on Met-1. Residues 289-308 form a C4-type zinc finger; the sequence is CSVCLCVLSIIPPGNKCPAC.

Belongs to the TFB4 family. In terms of assembly, component of the 7-subunit TFIIH core complex composed of XPB/SSL2, XPD/RAD3, SSL1, TFB1, TFB2, TFB4 and TFB5, which is active in NER. The core complex associates with the 3-subunit CTD-kinase module TFIIK composed of CCL1, KIN28 and TFB3 to form the 10-subunit holoenzyme (holo-TFIIH) active in transcription. An additionnal subunit, TFB6, plays a role in the dissociation of the SSL2 helicase from TFIIH after transcription initiation.

Its subcellular location is the nucleus. Its function is as follows. Component of the general transcription and DNA repair factor IIH (TFIIH) core complex, which is involved in general and transcription-coupled nucleotide excision repair (NER) of damaged DNA and, when complexed to TFIIK, in RNA transcription by RNA polymerase II. In NER, TFIIH acts by opening DNA around the lesion to allow the excision of the damaged oligonucleotide and its replacement by a new DNA fragment. In transcription, TFIIH has an essential role in transcription initiation. When the pre-initiation complex (PIC) has been established, TFIIH is required for promoter opening and promoter escape. Phosphorylation of the C-terminal tail (CTD) of the largest subunit of RNA polymerase II by the kinase module TFIIK controls the initiation of transcription. This chain is General transcription and DNA repair factor IIH subunit TFB4 (TFB4), found in Saccharomyces cerevisiae (strain ATCC 204508 / S288c) (Baker's yeast).